The chain runs to 382 residues: Cell division cycle-associated protein 7 (382 aa).

Disordered regions lie at residues 68–118 and 151–217; these read PLRV…EDGM and GRHS…EDKY. Residues 105-117 show a composition bias toward acidic residues; sequence SEEEEEEEEEEDG. Positions 152-177 are interaction with MYC; it reads RHSLPGHRAKDSKSPRRRTFPGVATR. The Nuclear localization signal motif lies at 167 to 183; that stretch reads RRRTFPGVATRRNPERR. Phosphothreonine is present on threonine 170. Serine 197 carries the post-translational modification Phosphoserine. At threonine 203 the chain carries Phosphothreonine. Over residues 203 to 215 the composition is skewed to acidic residues; that stretch reads TEEEEEEEEEEED. A Glycyl lysine isopeptide (Lys-Gly) (interchain with G-Cter in SUMO2) cross-link involves residue lysine 216. Serine 225 is modified (phosphoserine). The segment at 258-382 is mediates transcriptional activity; sequence EEEIRNICSN…SLKQEFEMQA (125 aa).

Interacts with MYC (via C-terminus), YWHAE and YWHAZ. Post-translationally, phosphorylation at Thr-170 promotes interaction with YWHAE and YWHAZ, dissociation from MYC and sequestration in the cytoplasm.

The protein localises to the nucleus. Its subcellular location is the cytoplasm. Its function is as follows. Participates in MYC-mediated cell transformation and apoptosis; induces anchorage-independent growth and clonogenicity in lymphoblastoid cells. Insufficient to induce tumorigenicity when overexpressed but contributes to MYC-mediated tumorigenesis. May play a role as transcriptional regulator. This is Cell division cycle-associated protein 7 (Cdca7) from Mus musculus (Mouse).